A 476-amino-acid chain; its full sequence is Argininosuccinate lyase (476 aa).

Positions Met1–Ser17 are enriched in low complexity. Residues Met1–Met22 are disordered.

It belongs to the lyase 1 family. Argininosuccinate lyase subfamily.

It localises to the cytoplasm. The enzyme catalyses 2-(N(omega)-L-arginino)succinate = fumarate + L-arginine. It participates in amino-acid biosynthesis; L-arginine biosynthesis; L-arginine from L-ornithine and carbamoyl phosphate: step 3/3. The protein is Argininosuccinate lyase of Jannaschia sp. (strain CCS1).